Here is a 359-residue protein sequence, read N- to C-terminus: ATPase ASNA1 homolog (359 aa).

Residue 23 to 30 (KGGVGKTT) participates in ATP binding. Residue D63 is part of the active site. Residues E252 and N279 each contribute to the ATP site. C291 and C294 together coordinate Zn(2+).

This sequence belongs to the arsA ATPase family. In terms of assembly, homodimer.

The protein localises to the cytoplasm. Its subcellular location is the endoplasmic reticulum. ATPase required for the post-translational delivery of tail-anchored (TA) proteins to the endoplasmic reticulum. Recognizes and selectively binds the transmembrane domain of TA proteins in the cytosol. This complex then targets to the endoplasmic reticulum by membrane-bound receptors, where the tail-anchored protein is released for insertion. This process is regulated by ATP binding and hydrolysis. ATP binding drives the homodimer towards the closed dimer state, facilitating recognition of newly synthesized TA membrane proteins. ATP hydrolysis is required for insertion. Subsequently, the homodimer reverts towards the open dimer state, lowering its affinity for the membrane-bound receptor, and returning it to the cytosol to initiate a new round of targeting. This is ATPase ASNA1 homolog from Trypanosoma cruzi (strain CL Brener).